Here is a 561-residue protein sequence, read N- to C-terminus: Excitatory amino acid transporter 4 (561 aa).

Residues 1 to 52 (MSSHGNSLFLRESGAGGGCLQGLQDSLQQRALRTRLRLQTMTREHVRRFLRR) lie on the Cytoplasmic side of the membrane. The residue at position 2 (S2) is a Phosphoserine. 3 consecutive transmembrane segments (helical) span residues 53–73 (NAFI…AFAL), 96–116 (MLQM…MASL), and 130–150 (VYYM…VTII). N-linked (GlcNAc...) asparagine glycosylation is found at N213, N229, and N236. Helical transmembrane passes span 259 to 282 (SANG…IGGM), 292 to 319 (FFDS…LFLI), and 341 to 362 (LTVI…YFLV). Positions 368 to 398 (FPFIGGMLQALITAMGTSSSSATLPITFRCL) form an intramembrane region, discontinuously helical. L-aspartate is bound at residue 385–387 (SSS). The helical transmembrane segment at 408–434 (ITRFVLPVGATVNMDGTALYEALAAIF) threads the bilayer. Na(+) contacts are provided by G416, T418, and N420. L-aspartate contacts are provided by residues T424, 465-469 (IPQAG), D498, and N505. Residues 448–481 (ITTISITATAASVGAAGIPQAGLVTMVIVLTSVG) constitute an intramembrane region (discontinuously helical). Residues 495 to 516 (WFLDRLRTMTNVLGDSIGAAVI) traverse the membrane as a helical segment. 2 residues coordinate Na(+): N505 and D509.

This sequence belongs to the dicarboxylate/amino acid:cation symporter (DAACS) (TC 2.A.23) family. SLC1A6 subfamily. Homotrimer. Brain specific.

It is found in the cell membrane. The enzyme catalyses K(+)(in) + L-glutamate(out) + 3 Na(+)(out) + H(+)(out) = K(+)(out) + L-glutamate(in) + 3 Na(+)(in) + H(+)(in). It catalyses the reaction K(+)(in) + L-aspartate(out) + 3 Na(+)(out) + H(+)(out) = K(+)(out) + L-aspartate(in) + 3 Na(+)(in) + H(+)(in). It carries out the reaction D-aspartate(out) + K(+)(in) + 3 Na(+)(out) + H(+)(out) = D-aspartate(in) + K(+)(out) + 3 Na(+)(in) + H(+)(in). Its function is as follows. Sodium-dependent, high-affinity amino acid transporter that mediates the uptake of L-glutamate and also L-aspartate and D-aspartate. Functions as a symporter that transports one amino acid molecule together with two or three Na(+) ions and one proton, in parallel with the counter-transport of one K(+) ion. Mediates Cl(-) flux that is not coupled to amino acid transport; this avoids the accumulation of negative charges due to aspartate and Na(+) symport. Plays a redundant role in the rapid removal of released glutamate from the synaptic cleft, which is essential for terminating the postsynaptic action of glutamate. The chain is Excitatory amino acid transporter 4 (Slc1a6) from Mus musculus (Mouse).